The primary structure comprises 500 residues: Ribose import ATP-binding protein RbsA (500 aa).

2 consecutive ABC transporter domains span residues 3–239 and 246–493; these read IEMK…VGRE and DRTP…TGGV. 35–42 provides a ligand contact to ATP; it reads GENGAGKS.

It belongs to the ABC transporter superfamily. Ribose importer (TC 3.A.1.2.1) family. As to quaternary structure, the complex is composed of an ATP-binding protein (RbsA), two transmembrane proteins (RbsC) and a solute-binding protein (RbsB).

The protein resides in the cell membrane. It catalyses the reaction D-ribose(out) + ATP + H2O = D-ribose(in) + ADP + phosphate + H(+). In terms of biological role, part of the ABC transporter complex RbsABC involved in ribose import. Responsible for energy coupling to the transport system. The polypeptide is Ribose import ATP-binding protein RbsA (Lacticaseibacillus paracasei (strain ATCC 334 / BCRC 17002 / CCUG 31169 / CIP 107868 / KCTC 3260 / NRRL B-441) (Lactobacillus paracasei)).